A 307-amino-acid chain; its full sequence is Ornithine carbamoyltransferase (307 aa).

Carbamoyl phosphate contacts are provided by residues 50–53 (STRT), Gln-77, Arg-101, and 128–131 (HPCQ). Residues Asn-160, Asp-224, and 228–229 (SM) contribute to the L-ornithine site. Residues 264 to 265 (CL) and Arg-292 each bind carbamoyl phosphate.

It belongs to the aspartate/ornithine carbamoyltransferase superfamily. OTCase family.

It localises to the cytoplasm. The catalysed reaction is carbamoyl phosphate + L-ornithine = L-citrulline + phosphate + H(+). It participates in amino-acid biosynthesis; L-arginine biosynthesis; L-arginine from L-ornithine and carbamoyl phosphate: step 1/3. Functionally, reversibly catalyzes the transfer of the carbamoyl group from carbamoyl phosphate (CP) to the N(epsilon) atom of ornithine (ORN) to produce L-citrulline. This chain is Ornithine carbamoyltransferase, found in Clavibacter sepedonicus (Clavibacter michiganensis subsp. sepedonicus).